Here is a 724-residue protein sequence, read N- to C-terminus: Catalase-peroxidase (724 aa).

The disordered stretch occupies residues 1-26 (MDENKTKPTGKCPVMHGGNTSTGSSN). Positions 98–225 (WHSAGSYRTT…LAAVQMGLIY (128 aa)) form a cross-link, tryptophyl-tyrosyl-methioninium (Trp-Tyr) (with M-251). The active-site Proton acceptor is the His99. Residues 225–251 (YVNPEGVDGKSDPLRTAQDMRVTFSRM) constitute a cross-link (tryptophyl-tyrosyl-methioninium (Tyr-Met) (with W-98)). Heme b is bound at residue His266.

It belongs to the peroxidase family. Peroxidase/catalase subfamily. As to quaternary structure, homodimer or homotetramer. It depends on heme b as a cofactor. Post-translationally, formation of the three residue Trp-Tyr-Met cross-link is important for the catalase, but not the peroxidase activity of the enzyme.

The catalysed reaction is H2O2 + AH2 = A + 2 H2O. It carries out the reaction 2 H2O2 = O2 + 2 H2O. Its function is as follows. Bifunctional enzyme with both catalase and broad-spectrum peroxidase activity. The protein is Catalase-peroxidase of Pectobacterium atrosepticum (strain SCRI 1043 / ATCC BAA-672) (Erwinia carotovora subsp. atroseptica).